A 301-amino-acid polypeptide reads, in one-letter code: Probable alpha-L-glutamate ligase (301 aa).

Residues 104 to 287 enclose the ATP-grasp domain; the sequence is LQLLSRKGIG…IAGIIIQYLE (184 aa). Residues lysine 141, 178-179, aspartate 187, and 211-213 contribute to the ATP site; these read EY and RSN. Positions 248, 260, and 262 each coordinate Mg(2+). Aspartate 248, glutamate 260, and asparagine 262 together coordinate Mn(2+).

This sequence belongs to the RimK family. Mg(2+) is required as a cofactor. The cofactor is Mn(2+).

This chain is Probable alpha-L-glutamate ligase, found in Pseudomonas aeruginosa (strain UCBPP-PA14).